A 266-amino-acid chain; its full sequence is Carboxy-S-adenosyl-L-methionine synthase (266 aa).

Residues 1-24 (MPKRETQSLHDTQQQPGPTAPQRD) form a disordered region. Residues Tyr58, 83-85 (GCS), 108-109 (DN), 136-137 (DI), Asn151, and Arg218 each bind S-adenosyl-L-methionine.

The protein belongs to the class I-like SAM-binding methyltransferase superfamily. Cx-SAM synthase family. Homodimer.

It carries out the reaction prephenate + S-adenosyl-L-methionine = carboxy-S-adenosyl-L-methionine + 3-phenylpyruvate + H2O. In terms of biological role, catalyzes the conversion of S-adenosyl-L-methionine (SAM) to carboxy-S-adenosyl-L-methionine (Cx-SAM). This chain is Carboxy-S-adenosyl-L-methionine synthase, found in Yersinia enterocolitica serotype O:8 / biotype 1B (strain NCTC 13174 / 8081).